A 248-amino-acid polypeptide reads, in one-letter code: MAADPIHQFQITKLFTLGHVGGQEIAFTNSSAYMFGTVALIAILMLVPGRQLVPGRLQSIAELSYEFVANMIRSTAGKEGLKFFPLVFSLFMFIAVSNLIGIVPYTFTVSSHLIVTVALALLVFFTVLIYGFSKNGLKFFKLFVPSGVPIYILPLVVFIEVISFFLKPVSHSVRLFANMLAGHIALKVFASFVAMLGALGVVGWFGAVLPLGLTIALTALELLVAFLQAYVFAILTCIYLNDAIHPGH.

6 consecutive transmembrane segments (helical) span residues 27–47, 83–103, 113–133, 142–162, 192–212, and 215–235; these read FTNS…LMLV, FFPL…IGIV, LIVT…YGFS, LFVP…IEVI, FVAM…LPLG, and IALT…FAIL.

The protein belongs to the ATPase A chain family. F-type ATPases have 2 components, CF(1) - the catalytic core - and CF(0) - the membrane proton channel. CF(1) has five subunits: alpha(3), beta(3), gamma(1), delta(1), epsilon(1). CF(0) has four main subunits: a, b, b' and c.

Its subcellular location is the cell inner membrane. In terms of biological role, key component of the proton channel; it plays a direct role in the translocation of protons across the membrane. This is ATP synthase subunit a from Rhodopseudomonas palustris (strain ATCC BAA-98 / CGA009).